We begin with the raw amino-acid sequence, 234 residues long: NLP effector protein 1 (234 aa).

The first 18 residues, 1–18, serve as a signal peptide directing secretion; that stretch reads MQLRAFISVFASLACVNA. A glycan (N-linked (GlcNAc...) asparagine) is linked at Asn66. Residues 102 to 112 carry the Conserved undecapeptide motif I motif; sequence AFMYSWYMPKD. The Hepta-peptide GHRHDWE motif II signature appears at 119-125; the sequence is GHRHDWE.

This sequence belongs to the Necrosis inducing protein (NPP1) family.

The protein localises to the secreted. In terms of biological role, secreted effector that contributes to virulence during infection by P.capsici. Induces distinct chlorosis at 3 days after inoculation of host C.annuum leaves, and all the chlorotic areas gradually turn brown and become moderately necrotic at 7 days after inoculation. Leads only to chlorotic areas, without necrosis at 7 days after non-host N.benthamiana leaves infection. Induces cell death in hot pepper. The sequence is that of NLP effector protein 1 from Phytophthora capsici.